Here is a 1080-residue protein sequence, read N- to C-terminus: Kinesin-like protein KIN-14E (1080 aa).

Residues 1-35 (MDFSWTTGWEKAAADDDEAESAPAPAPPAPSPQEA) are disordered. A coiled-coil region spans residues 247-355 (QTRTSKLISK…KQEQTLLSLE (109 aa)). A Kinesin motor domain is found at 407-729 (NIRVFCRCRP…LNFASRVRRI (323 aa)). 490–497 (GQTGTGKT) provides a ligand contact to ATP. A coiled-coil region spans residues 736-893 (KQVDTAELQK…EHHRSVAESK (158 aa)). Residues 960–970 (AMSEKEQHILR) show a composition bias toward basic and acidic residues. The interval 960–1080 (AMSEKEQHIL…AVNKTRGWVR (121 aa)) is disordered. Residues 971 to 985 (SSDSMNKKVTNNSSI) show a composition bias toward polar residues. A compositionally biased stretch (low complexity) spans 1047–1059 (TATSKTAAATHKT).

It belongs to the TRAFAC class myosin-kinesin ATPase superfamily. Kinesin family. KIN-14 subfamily.

The sequence is that of Kinesin-like protein KIN-14E from Oryza sativa subsp. japonica (Rice).